Consider the following 232-residue polypeptide: Lipoprotein-releasing system ATP-binding protein LolD (232 aa).

Positions Ile-6–Val-231 constitute an ABC transporter domain. Gly-42–Ser-49 lines the ATP pocket.

This sequence belongs to the ABC transporter superfamily. Lipoprotein translocase (TC 3.A.1.125) family. In terms of assembly, the complex is composed of two ATP-binding proteins (LolD) and two transmembrane proteins (LolC and LolE).

The protein resides in the cell inner membrane. Functionally, part of the ABC transporter complex LolCDE involved in the translocation of mature outer membrane-directed lipoproteins, from the inner membrane to the periplasmic chaperone, LolA. Responsible for the formation of the LolA-lipoprotein complex in an ATP-dependent manner. This chain is Lipoprotein-releasing system ATP-binding protein LolD, found in Pseudoalteromonas translucida (strain TAC 125).